Consider the following 598-residue polypeptide: MNELIKHKLELLPDSPGCYLHKDKEGTIIYVGKAKNLKKRVRSYFRGSHDTKTELLVSEIVDFEYIVTESDTEALLLEINLIQKNMPKYNIKLKDDKSYPFLKITNESFPRLVITRYIKKNDGLYFGPYPDSYTANEVKKLLDRIFPFKKCKNPINKVCFYYHLGQCCAHTICHTDKAYWDRLIDDVKHFLNGKDDKIIEDLRSKMLAASEEMAFERAAEYRDLISGIATMRTKQRVMSKDLQDRDIFGYYVDKGWMCVQVFFVRQGKLIQRDVNLFPYYNDAEEDFLTYMGQFYQDKQHFIPKEVFIPEAIDEELVAAIVPTKIIKPKRGEKKQLVALATKNARVSLQQKFDLLEKDIKKTSGAIENLGQLLRIDKPVRIEAFDNSNIQGTSPVAAMVVFVDGKPSKKDYRKFKIKTVVGPDDYASMREVLFRRYSRVKKEGLQAPNLIIVDGGVGQVNVAKDVIEKQLGLTIPVAGLQKNDKHQTHDLLFGNPLEVVSLPRRSEEFFLLHRIQDEVHRFAVTFHRQVRRKNSFSSTLDHISGLGPKRKQLLLRHFKTITAIASATSEEIQALGIPKTVVEAIQQQITDNKNDRSSP.

One can recognise a GIY-YIG domain in the interval 14–91 (DSPGCYLHKD…IQKNMPKYNI (78 aa)). The region spanning 196–231 (DKIIEDLRSKMLAASEEMAFERAAEYRDLISGIATM) is the UVR domain.

The protein belongs to the UvrC family. Interacts with UvrB in an incision complex.

It localises to the cytoplasm. Functionally, the UvrABC repair system catalyzes the recognition and processing of DNA lesions. UvrC both incises the 5' and 3' sides of the lesion. The N-terminal half is responsible for the 3' incision and the C-terminal half is responsible for the 5' incision. The sequence is that of UvrABC system protein C from Streptococcus pyogenes serotype M6 (strain ATCC BAA-946 / MGAS10394).